A 214-amino-acid chain; its full sequence is MRIVLLGAPGAGKGTQAQFLMAKFGIPQISTGDMLRAAIKAGSELGNKAKAVMDAGQLVSDDLIIGLVKERVAQEDCKAGFLLDGFPRTIPQADAMKESGIVVDHVLEFDVPDEVIVERMAGRRVHSGSGRVYHLVYNPPKVEGKDDVSGDDLSIRPDDEEATVRKRLAIYHEQTKPLVDFYQAEAKSGSCSYLTIDGTQAVEKVNQLLSAQLA.

ATP is bound at residue G10–T15. An NMP region spans residues S30–V59. Residues T31, R36, Q57–V59, G85–R88, and Q92 each bind AMP. An LID region spans residues G122–D159. Residues R123 and V132 to Y133 contribute to the ATP site. R156 and R167 together coordinate AMP. Q200 is a binding site for ATP.

The protein belongs to the adenylate kinase family. As to quaternary structure, monomer.

It is found in the cytoplasm. The catalysed reaction is AMP + ATP = 2 ADP. Its pathway is purine metabolism; AMP biosynthesis via salvage pathway; AMP from ADP: step 1/1. Its function is as follows. Catalyzes the reversible transfer of the terminal phosphate group between ATP and AMP. Plays an important role in cellular energy homeostasis and in adenine nucleotide metabolism. This chain is Adenylate kinase, found in Colwellia psychrerythraea (strain 34H / ATCC BAA-681) (Vibrio psychroerythus).